The sequence spans 287 residues: Nucleoid occlusion protein (287 aa).

Residues glutamate 146–leucine 165 constitute a DNA-binding region (H-T-H motif).

The protein belongs to the ParB family.

It is found in the cytoplasm. It localises to the nucleoid. Its function is as follows. Effects nucleoid occlusion by binding relatively nonspecifically to DNA and preventing the assembly of the division machinery in the vicinity of the nucleoid, especially under conditions that disturb the cell cycle. It helps to coordinate cell division and chromosome segregation by preventing the formation of the Z ring through the nucleoid, which would cause chromosome breakage. This chain is Nucleoid occlusion protein, found in Listeria monocytogenes serotype 4a (strain HCC23).